Here is a 436-residue protein sequence, read N- to C-terminus: Trigger factor (436 aa).

The region spanning 163 to 248 (GDRVTVDFEG…VKKIEAANLP (86 aa)) is the PPIase FKBP-type domain.

Belongs to the FKBP-type PPIase family. Tig subfamily.

It localises to the cytoplasm. The enzyme catalyses [protein]-peptidylproline (omega=180) = [protein]-peptidylproline (omega=0). Involved in protein export. Acts as a chaperone by maintaining the newly synthesized protein in an open conformation. Functions as a peptidyl-prolyl cis-trans isomerase. This Delftia acidovorans (strain DSM 14801 / SPH-1) protein is Trigger factor.